We begin with the raw amino-acid sequence, 114 residues long: SNF1-related protein kinase regulatory subunit beta-3 (114 aa).

Residues 26–50 (SYNNVYSSTEDETRDPPAVPPHLQH) form a disordered region. Residues 40 to 114 (DPPAVPPHLQ…PVQRRGSANV (75 aa)) form an association with SNF1 complex (ASC) region.

The protein belongs to the 5'-AMP-activated protein kinase beta subunit family. Subunit of a probable heterotrimeric complex consisting of an alpha catalytic (KIN10 or KIN11) subunit, and a beta (KINB) and a gamma (KING or SNF4) non-catalytic regulatory subunits. Interacts with KIN10, KIN11 and SNF4. Interacts with FLZ1, FLZ2, FLZ3, FLZ4, FLZ5, FLZ7, FLZ8, FLZ10, FLZ13, FLZ14, FLZ15 and FLZ16. In terms of tissue distribution, expressed in rosette (at the protein level). Expressed in the whole plant and at the different developmental stage with a higher level in stems.

In terms of biological role, regulatory subunit of the probable trimeric SNF1-related protein kinase (SnRK) complex, which may play a role in a signal transduction cascade regulating gene expression and carbohydrate metabolism in higher plants. The sequence is that of SNF1-related protein kinase regulatory subunit beta-3 (KINB3) from Arabidopsis thaliana (Mouse-ear cress).